We begin with the raw amino-acid sequence, 53 residues long: MRNKEHNFPNQNNNKFEGEPRAKSEYASKRADGTTNTHPQERMRASGERSDFF.

Residues 1–53 form a disordered region; it reads MRNKEHNFPNQNNNKFEGEPRAKSEYASKRADGTTNTHPQERMRASGERSDFF. 2 stretches are compositionally biased toward basic and acidic residues: residues 16–32 and 39–53; these read FEGEPRAKSEYASKRAD and PQERMRASGERSDFF.

The protein belongs to the SspK family.

It is found in the spore core. This Geobacillus thermodenitrificans (strain NG80-2) protein is Small, acid-soluble spore protein K.